A 262-amino-acid chain; its full sequence is Ornithine carbamoyltransferase (262 aa).

Residues 3 to 7 (STRTR), Gln30, Arg54, and 81 to 84 (HPTQ) each bind carbamoyl phosphate. Residues Asn114, Asp178, and 182-183 (SM) contribute to the L-ornithine site. Residues 219 to 222 (HCLP) and Thr247 each bind carbamoyl phosphate.

It belongs to the aspartate/ornithine carbamoyltransferase superfamily. OTCase family.

The protein localises to the cytoplasm. The enzyme catalyses carbamoyl phosphate + L-ornithine = L-citrulline + phosphate + H(+). It functions in the pathway amino-acid biosynthesis; L-arginine biosynthesis; L-arginine from L-ornithine and carbamoyl phosphate: step 1/3. This Neisseria cinerea protein is Ornithine carbamoyltransferase (argF).